We begin with the raw amino-acid sequence, 79 residues long: U-actitoxin-Avd8b (79 aa).

The first 19 residues, 1–19 (MKSLVIVFVVLLGVAMISA), serve as a signal peptide directing secretion. Residues 20–36 (NEEELLAILQDQRNDAR) constitute a propeptide that is removed on maturation.

It belongs to the sea anemone 8 toxin family.

It is found in the secreted. The protein resides in the nematocyst. This Anemonia viridis (Snakelocks anemone) protein is U-actitoxin-Avd8b.